A 145-amino-acid chain; its full sequence is Putative BCoR-like protein 2 (145 aa).

The segment covering 1–27 (MKEKLSKKRAEVKGNRSWLEEFLKPSD) has biased composition (basic and acidic residues). Residues 1 to 58 (MKEKLSKKRAEVKGNRSWLEEFLKPSDNEEGPPPKNKVLSNNASSQKPTHSSCIPLLR) form a disordered region. Positions 38–52 (VLSNNASSQKPTHSS) are enriched in polar residues.

The protein belongs to the BCOR family.

The polypeptide is Putative BCoR-like protein 2 (BCORP1) (Homo sapiens (Human)).